A 119-amino-acid chain; its full sequence is Large ribosomal subunit protein bL20 (119 aa).

The protein belongs to the bacterial ribosomal protein bL20 family.

Its function is as follows. Binds directly to 23S ribosomal RNA and is necessary for the in vitro assembly process of the 50S ribosomal subunit. It is not involved in the protein synthesizing functions of that subunit. The protein is Large ribosomal subunit protein bL20 of Bradyrhizobium sp. (strain BTAi1 / ATCC BAA-1182).